Consider the following 426-residue polypeptide: Selenate reductase subunit C (426 aa).

10 helical membrane passes run 5–25 (LYFT…YIRL), 40–60 (WGLW…SFLL), 78–98 (LALF…LIDL), 119–139 (WEIQ…WFLM), 187–207 (ILGI…GSLF), 223–243 (IIFL…LYSF), 261–281 (LLTL…LIGL), 302–322 (FIFW…LITI), 330–350 (MGLA…ILVI), and 385–405 (VGLI…VPVF).

The protein belongs to the NrfD family. The complex is composed of three subunits: SrdA, SrdB and SrdC.

The protein localises to the cell membrane. The enzyme catalyses selenite + a quinone + H2O = selenate + a quinol. Component of the respiratory selenate reductase complex, which catalyzes the reduction of selenate to selenite. This subunit probably receives electrons directly from the membrane quinone pool and transfers the electrons to the iron-sulfur clusters of SrdB. May be the membrane anchor protein subunit of the complex. The chain is Selenate reductase subunit C from Mesobacillus selenatarsenatis (strain DSM 18680 / JCM 14380 / FERM P-15431 / SF-1).